Here is a 117-residue protein sequence, read N- to C-terminus: Prefoldin subunit beta (117 aa).

It belongs to the prefoldin subunit beta family. In terms of assembly, heterohexamer of two alpha and four beta subunits.

The protein localises to the cytoplasm. Molecular chaperone capable of stabilizing a range of proteins. Seems to fulfill an ATP-independent, HSP70-like function in archaeal de novo protein folding. This is Prefoldin subunit beta from Methanosarcina barkeri (strain Fusaro / DSM 804).